The primary structure comprises 331 residues: MLEIDGSYGEGGGQLVRTAVALSAVTGQGIRITNIRKNRPSPGLKQQHLKALETAARICRAQISGLFPGSTEISFVPVEIEGGKYDIDIGTAGSITLLLQCIMPALPFAKEKVELTIKGGTDVAWSPTIDYLQHVTFRALEQLGYSGSITLKEHGYYPKGGGKVSAYFKPCRLREFHFLKEKEDIKGSSHASNLPAHVPLRQAEAASKRLMEAGYPSLIETQSFEAFSIGSGITLWIGYIGGSALGERGLPAEKVGKNAADEIIPELRSGASVDTHLADQLIPYMALAGNSSYTVRELSLHTTTNIWVTEQFLDVKFRIEKKEGLFEVSVS.

ATP contacts are provided by residues Gln100 and 276–280 (HLADQ). His301 acts as the Tele-AMP-histidine intermediate in catalysis.

It belongs to the RNA 3'-terminal cyclase family. Type 1 subfamily.

It localises to the cytoplasm. The catalysed reaction is a 3'-end 3'-phospho-ribonucleotide-RNA + ATP = a 3'-end 2',3'-cyclophospho-ribonucleotide-RNA + AMP + diphosphate. Catalyzes the conversion of 3'-phosphate to a 2',3'-cyclic phosphodiester at the end of RNA. The mechanism of action of the enzyme occurs in 3 steps: (A) adenylation of the enzyme by ATP; (B) transfer of adenylate to an RNA-N3'P to produce RNA-N3'PP5'A; (C) and attack of the adjacent 2'-hydroxyl on the 3'-phosphorus in the diester linkage to produce the cyclic end product. The biological role of this enzyme is unknown but it is likely to function in some aspects of cellular RNA processing. The protein is RNA 3'-terminal phosphate cyclase of Methanosarcina barkeri (strain Fusaro / DSM 804).